The sequence spans 149 residues: Probable glycine-rich RNA-binding protein 1 (149 aa).

Positions 8–83 (YRCFVGGLAW…LDGRNITAQA (76 aa)) constitute an RRM domain. The disordered stretch occupies residues 80-149 (TAQARGSGTR…GRSEGGSWRN (70 aa)). Gly residues-rich tracts occupy residues 87–101 (GTRGGMVGGYGSGGY), 110–123 (YNRGGGGGYGGGYG), and 131–143 (YGDGGYGGQGRSE).

The protein belongs to the GR-RBP family.

Possibly has a role in RNA transcription or processing during stress. In Arabidopsis thaliana (Mouse-ear cress), this protein is Probable glycine-rich RNA-binding protein 1 (RBG1).